The chain runs to 231 residues: Superoxide dismutase [Mn], mitochondrial (231 aa).

The N-terminal 27 residues, 1–27 (MALRTLASRKTLAAAALPLAAAAAARG), are a transit peptide targeting the mitochondrion. Residues H55, H103, D192, and H196 each coordinate Mn(2+).

This sequence belongs to the iron/manganese superoxide dismutase family. As to quaternary structure, homotetramer. Mn(2+) serves as cofactor.

It localises to the mitochondrion matrix. It catalyses the reaction 2 superoxide + 2 H(+) = H2O2 + O2. Functionally, destroys superoxide anion radicals which are normally produced within the cells and which are toxic to biological systems. This is Superoxide dismutase [Mn], mitochondrial (SODA) from Oryza sativa subsp. japonica (Rice).